The sequence spans 2139 residues: U5 small nuclear ribonucleoprotein 200 kDa helicase (2139 aa).

Residues S17 and S26 each carry the phosphoserine modification. The segment at E39 to D80 is disordered. K46 is covalently cross-linked (Glycyl lysine isopeptide (Lys-Gly) (interchain with G-Cter in SUMO2)). Over residues E48–D80 the composition is skewed to basic and acidic residues. Residues D54–M84 are a coiled coil. S225 bears the Phosphoserine mark. Position 389 is a phosphothreonine (T389). The interaction with C9orf78 and WBP4 stretch occupies residues D395–A2132. In terms of domain architecture, Helicase ATP-binding 1 spans R490–L673. A503 to T510 provides a ligand contact to ATP. A DEAH box motif is present at residues D615–H618. Residues P684–G921 form the Helicase C-terminal 1 domain. The residue at position 709 (Y709) is a Phosphotyrosine. K944 participates in a covalent cross-link: Glycyl lysine isopeptide (Lys-Gly) (interchain with G-Cter in SUMO). Position 971 is an N6-acetyllysine; alternate (K971). A Glycyl lysine isopeptide (Lys-Gly) (interchain with G-Cter in SUMO); alternate cross-link involves residue K971. An SEC63 1 domain is found at T982–F1289. Glycyl lysine isopeptide (Lys-Gly) (interchain with G-Cter in SUMO) cross-links involve residues K1071 and K1199. Residues L1285–D2139 form an interaction with TSSC4 region. Residues N1340–F1515 enclose the Helicase ATP-binding 2 domain. ATP is bound at residue A1353–T1360. The residue at position 1431 (T1431) is a Phosphothreonine. The DEAH box signature appears at D1457–H1460. One can recognise a Helicase C-terminal 2 domain in the interval P1548–D1756. Residue T1768 is modified to Phosphothreonine. Positions P1815 to V2127 constitute an SEC63 2 domain. S2005 is modified (phosphoserine). Residue K2094 forms a Glycyl lysine isopeptide (Lys-Gly) (interchain with G-Cter in SUMO) linkage. T2134 carries the post-translational modification Phosphothreonine. Phosphoserine is present on residues S2136 and S2138.

The protein belongs to the helicase family. SKI2 subfamily. In terms of assembly, component of a core complex containing at least PRPF8, SNRNP200, EFTUD2 and SNRNP40. Component of the U5 snRNP and U4/U6-U5 tri-snRNP complexes, building blocks of the spliceosome. Component of the U4/U6-U5 tri-snRNP complex composed of the U4, U6 and U5 snRNAs and at least PRPF3, PRPF4, PRPF6, PRPF8, PRPF31, SNRNP200, TXNL4A, SNRNP40, DDX23, CD2BP2, PPIH, SNU13, EFTUD2, SART1 and USP39. Component of precatalytic, catalytic and postcatalytic spliceosomal complexes. Component of the minor spliceosome, which splices U12-type introns. Interacts with C9orf78; the interaction is direct and mutually exclusive with its interaction with WBP4. Interacts with WBP4; the interaction is mutually exclusive with its interaction with C9orf78. Interacts with PRPF8. Interacts with TSSC4; the interaction is direct, excludes recruitment of C9ORF78 and WBP4 to SNRNP200 and negatively regulates its RNA helicase activity.

It is found in the nucleus. It carries out the reaction ATP + H2O = ADP + phosphate + H(+). Its function is as follows. Catalyzes the ATP-dependent unwinding of U4/U6 RNA duplices, an essential step in the assembly of a catalytically active spliceosome. Plays a role in pre-mRNA splicing as core component of precatalytic, catalytic and postcatalytic spliceosomal complexes. As a component of the minor spliceosome, involved in the splicing of U12-type introns in pre-mRNAs. Involved in spliceosome assembly, activation and disassembly. Mediates changes in the dynamic network of RNA-RNA interactions in the spliceosome. The polypeptide is U5 small nuclear ribonucleoprotein 200 kDa helicase (Snrnp200) (Rattus norvegicus (Rat)).